A 429-amino-acid polypeptide reads, in one-letter code: Gamma-glutamyl phosphate reductase (429 aa).

The protein belongs to the gamma-glutamyl phosphate reductase family.

The protein resides in the cytoplasm. The catalysed reaction is L-glutamate 5-semialdehyde + phosphate + NADP(+) = L-glutamyl 5-phosphate + NADPH + H(+). Its pathway is amino-acid biosynthesis; L-proline biosynthesis; L-glutamate 5-semialdehyde from L-glutamate: step 2/2. Its function is as follows. Catalyzes the NADPH-dependent reduction of L-glutamate 5-phosphate into L-glutamate 5-semialdehyde and phosphate. The product spontaneously undergoes cyclization to form 1-pyrroline-5-carboxylate. This chain is Gamma-glutamyl phosphate reductase, found in Methylocella silvestris (strain DSM 15510 / CIP 108128 / LMG 27833 / NCIMB 13906 / BL2).